A 449-amino-acid chain; its full sequence is Transport protein ComB (449 aa).

Over 1–20 (MKPEFLESAEFYNRRYHNFS) the chain is Cytoplasmic. A helical membrane pass occupies residues 21 to 41 (SSVIVPMALLLVFLLGFATVA). At 42–449 (EKEMSLSTRA…YYLDQFLNKE (408 aa)) the chain is on the extracellular side.

Belongs to the membrane fusion protein (MFP) (TC 8.A.1) family.

Its subcellular location is the cell membrane. Required for induction of competence. This is Transport protein ComB (comB) from Streptococcus pneumoniae (strain ATCC BAA-255 / R6).